The chain runs to 344 residues: Tetraacyldisaccharide 4'-kinase (344 aa).

68-75 lines the ATP pocket; the sequence is TAGGNGKT.

It belongs to the LpxK family.

It catalyses the reaction a lipid A disaccharide + ATP = a lipid IVA + ADP + H(+). It functions in the pathway glycolipid biosynthesis; lipid IV(A) biosynthesis; lipid IV(A) from (3R)-3-hydroxytetradecanoyl-[acyl-carrier-protein] and UDP-N-acetyl-alpha-D-glucosamine: step 6/6. Functionally, transfers the gamma-phosphate of ATP to the 4'-position of a tetraacyldisaccharide 1-phosphate intermediate (termed DS-1-P) to form tetraacyldisaccharide 1,4'-bis-phosphate (lipid IVA). The polypeptide is Tetraacyldisaccharide 4'-kinase (Photobacterium profundum (strain SS9)).